Reading from the N-terminus, the 191-residue chain is Chorion class B protein Ld34 (191 aa).

An N-terminal signal peptide occupies residues 1-21 (MSAKIILVFCAQALFVQSALS).

It belongs to the chorion protein family.

Its function is as follows. This protein is one of many from the eggshell of the gypsy moth. This is Chorion class B protein Ld34 from Lymantria dispar (Gypsy moth).